We begin with the raw amino-acid sequence, 547 residues long: Phosphoethanolamine transferase EptA (547 aa).

Over Met1–Pro9 the chain is Cytoplasmic. Residues Val10 to Ile30 form a helical membrane-spanning segment. The Periplasmic portion of the chain corresponds to Ala31–Asn47. A helical membrane pass occupies residues Val48–Leu68. Topologically, residues Ala69–Ala79 are cytoplasmic. Residues Cys80–Ile100 traverse the membrane as a helical segment. Topologically, residues Asp101–Gln123 are periplasmic. Residues Met124–Ile144 traverse the membrane as a helical segment. Residues Arg145–Gly154 lie on the Cytoplasmic side of the membrane. A helical membrane pass occupies residues Leu155–Phe175. The Periplasmic segment spans residues Tyr176–Glu547.

It belongs to the phosphoethanolamine transferase family. EptA subfamily.

Its subcellular location is the cell inner membrane. It participates in bacterial outer membrane biogenesis; LPS lipid A biosynthesis. Functionally, catalyzes the addition of a phosphoethanolamine moiety to the lipid A. The phosphoethanolamine modification is required for resistance to polymyxin. The chain is Phosphoethanolamine transferase EptA (eptA) from Salmonella typhimurium (strain LT2 / SGSC1412 / ATCC 700720).